Consider the following 337-residue polypeptide: Holliday junction branch migration complex subunit RuvB (337 aa).

Residues methionine 1–tyrosine 181 are large ATPase domain (RuvB-L). ATP-binding positions include leucine 20, arginine 21, glycine 62, lysine 65, threonine 66, threonine 67, glutamate 128–phenylalanine 130, arginine 171, tyrosine 181, and arginine 218. Threonine 66 serves as a coordination point for Mg(2+). The tract at residues serine 182–glycine 252 is small ATPAse domain (RuvB-S). Residues serine 255–phenylalanine 337 form a head domain (RuvB-H) region. DNA contacts are provided by arginine 309 and arginine 314.

This sequence belongs to the RuvB family. In terms of assembly, homohexamer. Forms an RuvA(8)-RuvB(12)-Holliday junction (HJ) complex. HJ DNA is sandwiched between 2 RuvA tetramers; dsDNA enters through RuvA and exits via RuvB. An RuvB hexamer assembles on each DNA strand where it exits the tetramer. Each RuvB hexamer is contacted by two RuvA subunits (via domain III) on 2 adjacent RuvB subunits; this complex drives branch migration. In the full resolvosome a probable DNA-RuvA(4)-RuvB(12)-RuvC(2) complex forms which resolves the HJ.

The protein localises to the cytoplasm. The enzyme catalyses ATP + H2O = ADP + phosphate + H(+). Its function is as follows. The RuvA-RuvB-RuvC complex processes Holliday junction (HJ) DNA during genetic recombination and DNA repair, while the RuvA-RuvB complex plays an important role in the rescue of blocked DNA replication forks via replication fork reversal (RFR). RuvA specifically binds to HJ cruciform DNA, conferring on it an open structure. The RuvB hexamer acts as an ATP-dependent pump, pulling dsDNA into and through the RuvAB complex. RuvB forms 2 homohexamers on either side of HJ DNA bound by 1 or 2 RuvA tetramers; 4 subunits per hexamer contact DNA at a time. Coordinated motions by a converter formed by DNA-disengaged RuvB subunits stimulates ATP hydrolysis and nucleotide exchange. Immobilization of the converter enables RuvB to convert the ATP-contained energy into a lever motion, pulling 2 nucleotides of DNA out of the RuvA tetramer per ATP hydrolyzed, thus driving DNA branch migration. The RuvB motors rotate together with the DNA substrate, which together with the progressing nucleotide cycle form the mechanistic basis for DNA recombination by continuous HJ branch migration. Branch migration allows RuvC to scan DNA until it finds its consensus sequence, where it cleaves and resolves cruciform DNA. The sequence is that of Holliday junction branch migration complex subunit RuvB from Sulfurimonas denitrificans (strain ATCC 33889 / DSM 1251) (Thiomicrospira denitrificans (strain ATCC 33889 / DSM 1251)).